The following is a 238-amino-acid chain: Uracil-DNA glycosylase (238 aa).

The Proton acceptor role is filled by Asp72.

The protein belongs to the uracil-DNA glycosylase (UDG) superfamily. UNG family.

The protein resides in the cytoplasm. It catalyses the reaction Hydrolyzes single-stranded DNA or mismatched double-stranded DNA and polynucleotides, releasing free uracil.. Functionally, excises uracil residues from the DNA which can arise as a result of misincorporation of dUMP residues by DNA polymerase or due to deamination of cytosine. In Chromobacterium violaceum (strain ATCC 12472 / DSM 30191 / JCM 1249 / CCUG 213 / NBRC 12614 / NCIMB 9131 / NCTC 9757 / MK), this protein is Uracil-DNA glycosylase.